The sequence spans 89 residues: Small ribosomal subunit protein uS15 (89 aa).

The protein belongs to the universal ribosomal protein uS15 family. In terms of assembly, part of the 30S ribosomal subunit. Forms a bridge to the 50S subunit in the 70S ribosome, contacting the 23S rRNA.

Its function is as follows. One of the primary rRNA binding proteins, it binds directly to 16S rRNA where it helps nucleate assembly of the platform of the 30S subunit by binding and bridging several RNA helices of the 16S rRNA. Forms an intersubunit bridge (bridge B4) with the 23S rRNA of the 50S subunit in the ribosome. This is Small ribosomal subunit protein uS15 from Pseudomonas entomophila (strain L48).